The following is a 609-amino-acid chain: UvrABC system protein C (609 aa).

The region spanning 16–94 is the GIY-YIG domain; the sequence is SSAGVYRMYD…IKQYMPKYNV (79 aa). The UVR domain maps to 203 to 238; that stretch reads KQVISELVAKMEEAAGQQAYEQAARFRDQIMALRRV.

The protein belongs to the UvrC family. As to quaternary structure, interacts with UvrB in an incision complex.

Its subcellular location is the cytoplasm. Functionally, the UvrABC repair system catalyzes the recognition and processing of DNA lesions. UvrC both incises the 5' and 3' sides of the lesion. The N-terminal half is responsible for the 3' incision and the C-terminal half is responsible for the 5' incision. The chain is UvrABC system protein C from Shewanella sp. (strain ANA-3).